Consider the following 725-residue polypeptide: Kinesin-like protein KIN-8A (725 aa).

Residues 1–32 (MPVSTRSKVMKQERNEQENTNLNLPLRNPHQG) form a disordered region. The Kinesin motor domain occupies 151–481 (RILVFVRLRP…LHWADRAKEI (331 aa)). 243-250 (GATGAGKT) contributes to the ATP binding site. 2 coiled-coil regions span residues 499–541 (EGAD…AANN) and 583–617 (ESLK…EHGL). 2 disordered regions span residues 652 to 672 (GSLR…RFAS) and 691 to 725 (SPAL…HMKH). Positions 655–665 (RPKEKEKELKS) are enriched in basic and acidic residues.

This sequence belongs to the TRAFAC class myosin-kinesin ATPase superfamily. Kinesin family. KIN-8 subfamily.

This is Kinesin-like protein KIN-8A from Arabidopsis thaliana (Mouse-ear cress).